A 178-amino-acid chain; its full sequence is NADH-quinone oxidoreductase subunit B (178 aa).

The [4Fe-4S] cluster site is built by cysteine 45, cysteine 46, cysteine 111, and cysteine 140.

The protein belongs to the complex I 20 kDa subunit family. As to quaternary structure, NDH-1 is composed of 15 different subunits. Subunits NuoB, C, D, E, F, and G constitute the peripheral sector of the complex. [4Fe-4S] cluster is required as a cofactor.

The protein localises to the cell membrane. The enzyme catalyses a quinone + NADH + 5 H(+)(in) = a quinol + NAD(+) + 4 H(+)(out). NDH-1 shuttles electrons from NADH, via FMN and iron-sulfur (Fe-S) centers, to quinones in the respiratory chain. The immediate electron acceptor for the enzyme in this species is believed to be a menaquinone. Couples the redox reaction to proton translocation (for every two electrons transferred, four hydrogen ions are translocated across the cytoplasmic membrane), and thus conserves the redox energy in a proton gradient. In Deinococcus deserti (strain DSM 17065 / CIP 109153 / LMG 22923 / VCD115), this protein is NADH-quinone oxidoreductase subunit B.